A 188-amino-acid chain; its full sequence is dCTP deaminase (188 aa).

Residues Lys111–Arg116, Thr135–Glu137, Gln156, Tyr170, and Gln180 contribute to the dCTP site. Glu137 serves as the catalytic Proton donor/acceptor.

It belongs to the dCTP deaminase family. Homotrimer.

The catalysed reaction is dCTP + H2O + H(+) = dUTP + NH4(+). The protein operates within pyrimidine metabolism; dUMP biosynthesis; dUMP from dCTP (dUTP route): step 1/2. Catalyzes the deamination of dCTP to dUTP. In Herminiimonas arsenicoxydans, this protein is dCTP deaminase.